The primary structure comprises 1616 residues: Putative inactive phenolphthiocerol synthesis polyketide synthase type I Pks1 (1616 aa).

The interval 83 to 397 is acyltransferase; that stretch reads TVVVFPGQGA…GQVFTTGVPV (315 aa). Ser-174 acts as the For acyltransferase activity in catalysis. Residues 445–567 form an N-terminal hotdog fold region; it reads HALLGAVVER…GMLGVAAAET (123 aa). Residues 445–605 are dehydratase; that stretch reads HALLGAVVER…YAYGPAFQGL (161 aa). The 275-residue stretch at 445-719 folds into the PKS/mFAS DH domain; the sequence is HALLGAVVER…TRPITAEQLR (275 aa). His-477 (proton acceptor; for dehydratase activity) is an active-site residue. Residues 579-719 are C-terminal hotdog fold; it reads AESVDISDGY…TRPITAEQLR (141 aa). Asp-640 serves as the catalytic Proton donor; for dehydratase activity. The segment at 910-1215 is enoylreductase; sequence GTLEDLVIQP…QARHIGKVVL (306 aa). Residues 1040 to 1057 and 1229 to 1244 each bind NADP(+); these read VLIH…VQLA and TVVI…GVLA. Residues 1228–1409 form a beta-ketoacyl reductase region; the sequence is GTVVITGATG…SLAWGLWEQP (182 aa). Positions 1514–1589 constitute a Carrier domain; sequence ELLVGLVCLQ…AVAEYVAQQM (76 aa). Position 1549 is an O-(pantetheine 4'-phosphoryl)serine (Ser-1549). Positions 1588–1604 are enriched in polar residues; the sequence is QMSGSRPTESGDPTSQV. The segment at 1588-1616 is disordered; sequence QMSGSRPTESGDPTSQVVEPAAAEVSVHA.

It depends on pantetheine 4'-phosphate as a cofactor.

It functions in the pathway lipid metabolism; fatty acid biosynthesis. May play a role in phthiocerol biosynthesis. The chain is Putative inactive phenolphthiocerol synthesis polyketide synthase type I Pks1 (pks1) from Mycobacterium tuberculosis (strain ATCC 25618 / H37Rv).